The sequence spans 500 residues: Cytochrome P450 2D27 (500 aa).

Residue Cys-446 coordinates heme.

The protein belongs to the cytochrome P450 family. The cofactor is heme. Expressed in liver, but not in kidney, small intestine, and brain.

Its subcellular location is the endoplasmic reticulum membrane. It is found in the microsome membrane. Its function is as follows. Has bufuralol 1'-hydroxylase and debrisoquine 4-hydroxylase activities. The polypeptide is Cytochrome P450 2D27 (CYP2D27) (Mesocricetus auratus (Golden hamster)).